The following is a 390-amino-acid chain: Argininosuccinate synthase (390 aa).

6–14 (AYSGGLDTT) serves as a coordination point for ATP. Tyr84 serves as a coordination point for L-citrulline. Position 114 (Gly114) interacts with ATP. L-aspartate is bound by residues Thr116, Asn120, and Asp121. Asn120 is an L-citrulline binding site. Residues Arg124, Ser171, Ser180, Glu253, and Tyr265 each coordinate L-citrulline.

It belongs to the argininosuccinate synthase family. Type 1 subfamily. Homotetramer.

Its subcellular location is the cytoplasm. The catalysed reaction is L-citrulline + L-aspartate + ATP = 2-(N(omega)-L-arginino)succinate + AMP + diphosphate + H(+). It functions in the pathway amino-acid biosynthesis; L-arginine biosynthesis; L-arginine from L-ornithine and carbamoyl phosphate: step 2/3. This Sulfurisphaera tokodaii (strain DSM 16993 / JCM 10545 / NBRC 100140 / 7) (Sulfolobus tokodaii) protein is Argininosuccinate synthase.